The primary structure comprises 312 residues: D-alanine--D-alanine ligase (312 aa).

The ATP-grasp domain maps to 108–308 (KLVWQQTGIP…YSELVVKVLS (201 aa)). 138–193 (VAKLGVPLFVKPASEGSSVAVEKVKSADALPAALEEAAKHDKIVIVEKSIEGGGEY) is an ATP binding site. Mg(2+)-binding residues include Asp-262, Glu-275, and Asn-277.

It belongs to the D-alanine--D-alanine ligase family. It depends on Mg(2+) as a cofactor. The cofactor is Mn(2+).

Its subcellular location is the cytoplasm. The catalysed reaction is 2 D-alanine + ATP = D-alanyl-D-alanine + ADP + phosphate + H(+). The protein operates within cell wall biogenesis; peptidoglycan biosynthesis. Its function is as follows. Cell wall formation. This Burkholderia mallei (strain NCTC 10247) protein is D-alanine--D-alanine ligase.